A 158-amino-acid chain; its full sequence is Cyclic pyranopterin monophosphate synthase (158 aa).

Substrate contacts are provided by residues 75–77 and 113–114; these read LCH and ME. The active site involves Asp-128.

Belongs to the MoaC family. Homohexamer; trimer of dimers.

The enzyme catalyses (8S)-3',8-cyclo-7,8-dihydroguanosine 5'-triphosphate = cyclic pyranopterin phosphate + diphosphate. The protein operates within cofactor biosynthesis; molybdopterin biosynthesis. Functionally, catalyzes the conversion of (8S)-3',8-cyclo-7,8-dihydroguanosine 5'-triphosphate to cyclic pyranopterin monophosphate (cPMP). This is Cyclic pyranopterin monophosphate synthase from Azorhizobium caulinodans (strain ATCC 43989 / DSM 5975 / JCM 20966 / LMG 6465 / NBRC 14845 / NCIMB 13405 / ORS 571).